Consider the following 507-residue polypeptide: Histidine ammonia-lyase (507 aa).

The segment at residues 143–145 (SSG) is a cross-link (5-imidazolinone (Ser-Gly)). Serine 144 bears the 2,3-didehydroalanine (Ser) mark.

This sequence belongs to the PAL/histidase family. Contains an active site 4-methylidene-imidazol-5-one (MIO), which is formed autocatalytically by cyclization and dehydration of residues Ser-Ser-Gly.

It is found in the cytoplasm. The catalysed reaction is L-histidine = trans-urocanate + NH4(+). It participates in amino-acid degradation; L-histidine degradation into L-glutamate; N-formimidoyl-L-glutamate from L-histidine: step 1/3. The protein is Histidine ammonia-lyase of Alkaliphilus metalliredigens (strain QYMF).